Reading from the N-terminus, the 369-residue chain is Tetraacyldisaccharide 4'-kinase (369 aa).

Residue 68–75 (VVGGTGKT) coordinates ATP.

The protein belongs to the LpxK family.

It catalyses the reaction a lipid A disaccharide + ATP = a lipid IVA + ADP + H(+). The protein operates within glycolipid biosynthesis; lipid IV(A) biosynthesis; lipid IV(A) from (3R)-3-hydroxytetradecanoyl-[acyl-carrier-protein] and UDP-N-acetyl-alpha-D-glucosamine: step 6/6. Functionally, transfers the gamma-phosphate of ATP to the 4'-position of a tetraacyldisaccharide 1-phosphate intermediate (termed DS-1-P) to form tetraacyldisaccharide 1,4'-bis-phosphate (lipid IVA). The protein is Tetraacyldisaccharide 4'-kinase of Chlamydia trachomatis serovar D (strain ATCC VR-885 / DSM 19411 / UW-3/Cx).